A 252-amino-acid polypeptide reads, in one-letter code: Phosphate import ATP-binding protein PstB (252 aa).

The region spanning 6 to 247 (ITIEKLNLYY…PKDERTEKYI (242 aa)) is the ABC transporter domain. 38 to 45 (GPSGCGKS) serves as a coordination point for ATP.

It belongs to the ABC transporter superfamily. Phosphate importer (TC 3.A.1.7) family. The complex is composed of two ATP-binding proteins (PstB), two transmembrane proteins (PstC and PstA) and a solute-binding protein (PstS).

Its subcellular location is the cell membrane. The catalysed reaction is phosphate(out) + ATP + H2O = ADP + 2 phosphate(in) + H(+). Functionally, part of the ABC transporter complex PstSACB involved in phosphate import. Responsible for energy coupling to the transport system. The polypeptide is Phosphate import ATP-binding protein PstB (Lactobacillus delbrueckii subsp. bulgaricus (strain ATCC 11842 / DSM 20081 / BCRC 10696 / JCM 1002 / NBRC 13953 / NCIMB 11778 / NCTC 12712 / WDCM 00102 / Lb 14)).